Reading from the N-terminus, the 352-residue chain is Glycerol-1-phosphate dehydrogenase [NAD(P)+] (352 aa).

Residues G99–D103 and T121–S124 each bind NAD(+). D126 contributes to the substrate binding site. S130 is a binding site for NAD(+). D173 is a binding site for substrate. Residues D173 and H253 each contribute to the Zn(2+) site. Position 257 (H257) interacts with substrate. Residue H269 participates in Zn(2+) binding.

The protein belongs to the glycerol-1-phosphate dehydrogenase family. Zn(2+) serves as cofactor.

It localises to the cytoplasm. It catalyses the reaction sn-glycerol 1-phosphate + NAD(+) = dihydroxyacetone phosphate + NADH + H(+). The enzyme catalyses sn-glycerol 1-phosphate + NADP(+) = dihydroxyacetone phosphate + NADPH + H(+). It functions in the pathway membrane lipid metabolism; glycerophospholipid metabolism. Its function is as follows. Catalyzes the NAD(P)H-dependent reduction of dihydroxyacetonephosphate (DHAP or glycerone phosphate) to glycerol 1-phosphate (G1P). The G1P thus generated is used as the glycerophosphate backbone of phospholipids in the cellular membranes of Archaea. This chain is Glycerol-1-phosphate dehydrogenase [NAD(P)+], found in Thermoplasma acidophilum (strain ATCC 25905 / DSM 1728 / JCM 9062 / NBRC 15155 / AMRC-C165).